The sequence spans 93 residues: Integration host factor subunit beta (93 aa).

It belongs to the bacterial histone-like protein family. Heterodimer of an alpha and a beta chain.

Its function is as follows. This protein is one of the two subunits of integration host factor, a specific DNA-binding protein that functions in genetic recombination as well as in transcriptional and translational control. The polypeptide is Integration host factor subunit beta (Tolumonas auensis (strain DSM 9187 / NBRC 110442 / TA 4)).